The sequence spans 660 residues: Macrolide export ATP-binding/permease protein MacB (660 aa).

The ABC transporter domain maps to 10 to 248 (LVLENIVRKF…TDSQALYGKQ (239 aa)). 46 to 53 (GASGSGKS) provides a ligand contact to ATP. Helical transmembrane passes span 285-305 (FLTM…VALG), 532-552 (ILTL…GIGV), 593-613 (VIGG…FLLF), and 625-645 (SIIL…FSPA).

Belongs to the ABC transporter superfamily. Macrolide exporter (TC 3.A.1.122) family. In terms of assembly, homodimer.

The protein resides in the cell inner membrane. Its function is as follows. Non-canonical ABC transporter that contains transmembrane domains (TMD), which form a pore in the inner membrane, and an ATP-binding domain (NBD), which is responsible for energy generation. Confers resistance against macrolides. This is Macrolide export ATP-binding/permease protein MacB from Bartonella henselae (strain ATCC 49882 / DSM 28221 / CCUG 30454 / Houston 1) (Rochalimaea henselae).